The sequence spans 222 residues: 3-dehydroquinate dehydratase (222 aa).

3-dehydroquinate contacts are provided by residues 29–31 (ELR) and R55. H112 (proton donor/acceptor) is an active-site residue. The Schiff-base intermediate with substrate role is filled by K139. Residues R178, S199, and Q203 each coordinate 3-dehydroquinate.

The protein belongs to the type-I 3-dehydroquinase family. Homodimer.

It carries out the reaction 3-dehydroquinate = 3-dehydroshikimate + H2O. It participates in metabolic intermediate biosynthesis; chorismate biosynthesis; chorismate from D-erythrose 4-phosphate and phosphoenolpyruvate: step 3/7. In terms of biological role, involved in the third step of the chorismate pathway, which leads to the biosynthesis of aromatic amino acids. Catalyzes the cis-dehydration of 3-dehydroquinate (DHQ) and introduces the first double bond of the aromatic ring to yield 3-dehydroshikimate. The polypeptide is 3-dehydroquinate dehydratase (Dehalococcoides mccartyi (strain ATCC BAA-2266 / KCTC 15142 / 195) (Dehalococcoides ethenogenes (strain 195))).